Reading from the N-terminus, the 511-residue chain is DnaJ homolog 1, mitochondrial (511 aa).

The N-terminal 55 residues, 1 to 55 (MAFQQGVLSRCSGVFRHHVGHSRHINNILYRHAIAFASIAPRIPKSSFHTSAIRN), are a transit peptide targeting the mitochondrion. The J domain maps to 59–127 (FKDPYDTLGL…RQQYDQFGPA (69 aa)). A CR-type zinc finger spans residues 217 to 297 (SKNVQLRFSA…CHGEGVQVNR (81 aa)). 4 CXXCXGXG motif repeats span residues 230-237 (CSTCSGTG), 247-254 (CSTCHGTG), 269-276 (CPTCNGEG), and 285-292 (CTKCHGEG).

It localises to the mitochondrion. Functionally, plays a role in mitochondrial biogenesis and protein folding. In Saccharomyces cerevisiae (strain ATCC 204508 / S288c) (Baker's yeast), this protein is DnaJ homolog 1, mitochondrial (MDJ1).